Reading from the N-terminus, the 294-residue chain is 4-hydroxy-tetrahydrodipicolinate synthase (294 aa).

T47 contacts pyruvate. Y135 serves as the catalytic Proton donor/acceptor. The Schiff-base intermediate with substrate role is filled by K163. Position 206 (I206) interacts with pyruvate.

This sequence belongs to the DapA family. As to quaternary structure, homodimer.

The protein localises to the cytoplasm. The catalysed reaction is L-aspartate 4-semialdehyde + pyruvate = (2S,4S)-4-hydroxy-2,3,4,5-tetrahydrodipicolinate + H2O + H(+). It functions in the pathway amino-acid biosynthesis; L-lysine biosynthesis via DAP pathway; (S)-tetrahydrodipicolinate from L-aspartate: step 3/4. Functionally, catalyzes the condensation of (S)-aspartate-beta-semialdehyde [(S)-ASA] and pyruvate to 4-hydroxy-tetrahydrodipicolinate (HTPA). This chain is 4-hydroxy-tetrahydrodipicolinate synthase, found in Staphylococcus epidermidis (strain ATCC 35984 / DSM 28319 / BCRC 17069 / CCUG 31568 / BM 3577 / RP62A).